The following is a 216-amino-acid chain: MSPNLNGPGGSDDSDRPDEPDDSDRPDESNSTGNPDTPDDRPNKTPDRPSDHPSSLLDQLRAILETLAEIEEDGHRQGHGRIDRGNAQIDYDYEVSFGLGPRSRRGKPSDEPRVEAPRTEGTDSQPEGEKSIHIETRETDDGERVVIADLPGVADDELDVTLDADESALELRTDEGIVGRVPLDQPDVEITDVRLRNQVLEIRLTRTNESNGSESK.

The segment at 1–141 (MSPNLNGPGG…IHIETRETDD (141 aa)) is disordered. Over residues 15–25 (DRPDEPDDSDR) the composition is skewed to acidic residues. Basic and acidic residues-rich tracts occupy residues 38-51 (PDDR…RPSD), 73-84 (DGHRQGHGRIDR), and 107-141 (KPSD…ETDD).

The protein belongs to the gas vesicle GvpH family. In terms of assembly, gvpF to GvpM interact with each other in vitro, and may form multi-subunit complex(es). Interacts with GvpC. Might interact with GvpA.

Its subcellular location is the gas vesicle. Proteins GvpF to GvpM might be involved in nucleating gas vesicle formation. A minor component of the gas vesicle. Gas vesicles are hollow, gas filled proteinaceous nanostructures found in some microorganisms. They allow positioning of halobacteria at the optimal depth for growth in the poorly aerated, shallow brine pools of their habitat. In terms of biological role, expression of a 9.5 kb mc-vac DNA fragment containing 2 divergently transcribed regions (gvpD-gvpE-gvpF-gvpG-gvpH-gvpI-gvpJ-gvpK-gvpL-gvpM and gvpA-gvpC-gvpN-gvpO) allows H.volcanii to produce gas vesicles. The sequence is that of Gas vesicle protein H from Haloferax mediterranei (strain ATCC 33500 / DSM 1411 / JCM 8866 / NBRC 14739 / NCIMB 2177 / R-4) (Halobacterium mediterranei).